The primary structure comprises 403 residues: Acetate kinase (403 aa).

Asn-7 lines the Mg(2+) pocket. Lys-14 provides a ligand contact to ATP. Position 90 (Arg-90) interacts with substrate. Asp-147 functions as the Proton donor/acceptor in the catalytic mechanism. Residues 207–211 (HIGNG), 283–285 (DMR), and 331–335 (GVGEN) each bind ATP. Glu-386 contributes to the Mg(2+) binding site.

It belongs to the acetokinase family. Homodimer. The cofactor is Mg(2+). Mn(2+) serves as cofactor.

The protein resides in the cytoplasm. It carries out the reaction acetate + ATP = acetyl phosphate + ADP. It participates in metabolic intermediate biosynthesis; acetyl-CoA biosynthesis; acetyl-CoA from acetate: step 1/2. In terms of biological role, catalyzes the formation of acetyl phosphate from acetate and ATP. Can also catalyze the reverse reaction. This is Acetate kinase from Thermotoga sp. (strain RQ2).